A 445-amino-acid polypeptide reads, in one-letter code: Methylenetetrahydrofolate--tRNA-(uracil-5-)-methyltransferase TrmFO (445 aa).

FAD is bound at residue 9–14 (GGGLAG).

Belongs to the MnmG family. TrmFO subfamily. Requires FAD as cofactor.

The protein localises to the cytoplasm. It carries out the reaction uridine(54) in tRNA + (6R)-5,10-methylene-5,6,7,8-tetrahydrofolate + NADH + H(+) = 5-methyluridine(54) in tRNA + (6S)-5,6,7,8-tetrahydrofolate + NAD(+). The enzyme catalyses uridine(54) in tRNA + (6R)-5,10-methylene-5,6,7,8-tetrahydrofolate + NADPH + H(+) = 5-methyluridine(54) in tRNA + (6S)-5,6,7,8-tetrahydrofolate + NADP(+). Its function is as follows. Catalyzes the folate-dependent formation of 5-methyl-uridine at position 54 (M-5-U54) in all tRNAs. The protein is Methylenetetrahydrofolate--tRNA-(uracil-5-)-methyltransferase TrmFO of Aquifex aeolicus (strain VF5).